Here is a 130-residue protein sequence, read N- to C-terminus: Small ribosomal subunit protein uS8 (130 aa).

This sequence belongs to the universal ribosomal protein uS8 family. Part of the 30S ribosomal subunit. Contacts proteins S5 and S12.

One of the primary rRNA binding proteins, it binds directly to 16S rRNA central domain where it helps coordinate assembly of the platform of the 30S subunit. The sequence is that of Small ribosomal subunit protein uS8 from Pseudomonas entomophila (strain L48).